Consider the following 267-residue polypeptide: 3-methyl-2-oxobutanoate hydroxymethyltransferase (267 aa).

Mg(2+) contacts are provided by Asp-45 and Asp-84. 3-methyl-2-oxobutanoate is bound by residues 45 to 46, Asp-84, and Lys-113; that span reads DS. Glu-115 lines the Mg(2+) pocket. Residue Glu-182 is the Proton acceptor of the active site.

The protein belongs to the PanB family. Homodecamer; pentamer of dimers. Mg(2+) serves as cofactor.

It localises to the cytoplasm. It catalyses the reaction 3-methyl-2-oxobutanoate + (6R)-5,10-methylene-5,6,7,8-tetrahydrofolate + H2O = 2-dehydropantoate + (6S)-5,6,7,8-tetrahydrofolate. It functions in the pathway cofactor biosynthesis; coenzyme A biosynthesis. In terms of biological role, catalyzes the reversible reaction in which hydroxymethyl group from 5,10-methylenetetrahydrofolate is transferred onto alpha-ketoisovalerate to form ketopantoate. The chain is 3-methyl-2-oxobutanoate hydroxymethyltransferase from Saccharolobus solfataricus (strain ATCC 35092 / DSM 1617 / JCM 11322 / P2) (Sulfolobus solfataricus).